The primary structure comprises 424 residues: Serine--tRNA ligase (424 aa).

A disordered region spans residues 109-129 (QEDVPYGESEEDNREERKWGD). Position 231-233 (231-233 (TAE)) interacts with L-serine. Residue 262–264 (RSE) participates in ATP binding. Glutamate 285 provides a ligand contact to L-serine. An ATP-binding site is contributed by 349-352 (EISS). Serine 385 provides a ligand contact to L-serine.

It belongs to the class-II aminoacyl-tRNA synthetase family. Type-1 seryl-tRNA synthetase subfamily. As to quaternary structure, homodimer. The tRNA molecule binds across the dimer.

It localises to the cytoplasm. The catalysed reaction is tRNA(Ser) + L-serine + ATP = L-seryl-tRNA(Ser) + AMP + diphosphate + H(+). The enzyme catalyses tRNA(Sec) + L-serine + ATP = L-seryl-tRNA(Sec) + AMP + diphosphate + H(+). The protein operates within aminoacyl-tRNA biosynthesis; selenocysteinyl-tRNA(Sec) biosynthesis; L-seryl-tRNA(Sec) from L-serine and tRNA(Sec): step 1/1. Functionally, catalyzes the attachment of serine to tRNA(Ser). Is also able to aminoacylate tRNA(Sec) with serine, to form the misacylated tRNA L-seryl-tRNA(Sec), which will be further converted into selenocysteinyl-tRNA(Sec). This chain is Serine--tRNA ligase, found in Shouchella clausii (strain KSM-K16) (Alkalihalobacillus clausii).